Reading from the N-terminus, the 216-residue chain is MAGRGGAARPNGPAAGNKICQFKLVLLGESAVGKSSLVLRFVKGQFHEYQESTIGAAFLTQTVCLDDTTVKFEIWDTAGQERYHSLAPMYYRGAQAAIVVYDITNTDTFARAKNWVKELQRQASPNIVIALAGNKADLASKRAVEFQEAQAYAEDNSLLFMETSAKTAMNVNEIFMAIAKKLPKNEPQNAAGAPGRNRGVDLQENNPASRSQCCSN.

Serine 30, alanine 31, glycine 33, lysine 34, serine 35, serine 36, histidine 47, glutamate 48, threonine 53, and glycine 79 together coordinate GTP. Serine 35 is a Mg(2+) binding site. Short sequence motifs (switch) lie at residues 45-57 (QFHE…IGAA) and 78-94 (AGQE…YRGA). Position 53 (threonine 53) interacts with Mg(2+). Serine 85 bears the Phosphoserine mark. 5 residues coordinate GTP: asparagine 134, lysine 135, aspartate 137, alanine 165, and lysine 166. The tract at residues 185 to 216 (NEPQNAAGAPGRNRGVDLQENNPASRSQCCSN) is disordered. Positions 203–216 (QENNPASRSQCCSN) are enriched in polar residues. 2 S-geranylgeranyl cysteine lipidation sites follow: cysteine 213 and cysteine 214.

The protein belongs to the small GTPase superfamily. Rab family. As to quaternary structure, interacts with EEA1 and INCA1. Interacts with GDI1, GDI2, CHML and CHM; phosphorylation at Ser-85 disrupts this interaction. Mg(2+) serves as cofactor. In terms of processing, phosphorylation of Ser-85 in the switch II region by LRRK2 prevents the association of RAB regulatory proteins, including CHM, CHML and RAB GDP dissociation inhibitors GDI1 and GDI2.

Its subcellular location is the cell membrane. It is found in the early endosome membrane. The protein resides in the melanosome. The enzyme catalyses GTP + H2O = GDP + phosphate + H(+). Regulated by guanine nucleotide exchange factors (GEFs) which promote the exchange of bound GDP for free GTP. Regulated by GTPase activating proteins (GAPs) which increase the GTP hydrolysis activity. Inhibited by GDP dissociation inhibitors (GDIs). In terms of biological role, the small GTPases Rab are key regulators of intracellular membrane trafficking, from the formation of transport vesicles to their fusion with membranes. Rabs cycle between an inactive GDP-bound form and an active GTP-bound form that is able to recruit to membranes different sets of downstream effectors directly responsible for vesicle formation, movement, tethering and fusion. The chain is Ras-related protein Rab-5C (RAB5C) from Bos taurus (Bovine).